The sequence spans 178 residues: Inorganic pyrophosphatase (178 aa).

Substrate-binding residues include Lys-30, Arg-44, and Tyr-56. Mg(2+) contacts are provided by Asp-66, Asp-71, and Asp-103. Substrate is bound at residue Tyr-140.

It belongs to the PPase family. In terms of assembly, homohexamer. Mg(2+) is required as a cofactor.

The protein resides in the cytoplasm. It catalyses the reaction diphosphate + H2O = 2 phosphate + H(+). Functionally, catalyzes the hydrolysis of inorganic pyrophosphate (PPi) forming two phosphate ions. This Pyrococcus abyssi (strain GE5 / Orsay) protein is Inorganic pyrophosphatase.